The sequence spans 507 residues: ATP synthase subunit alpha, chloroplastic (507 aa).

170–177 (GDRQTGKT) contributes to the ATP binding site.

It belongs to the ATPase alpha/beta chains family. In terms of assembly, F-type ATPases have 2 components, CF(1) - the catalytic core - and CF(0) - the membrane proton channel. CF(1) has five subunits: alpha(3), beta(3), gamma(1), delta(1), epsilon(1). CF(0) has four main subunits: a, b, b' and c.

The protein localises to the plastid. Its subcellular location is the chloroplast thylakoid membrane. The catalysed reaction is ATP + H2O + 4 H(+)(in) = ADP + phosphate + 5 H(+)(out). In terms of biological role, produces ATP from ADP in the presence of a proton gradient across the membrane. The alpha chain is a regulatory subunit. This Nicotiana tabacum (Common tobacco) protein is ATP synthase subunit alpha, chloroplastic.